Here is a 582-residue protein sequence, read N- to C-terminus: uncharacterized protein (582 aa).

The signal sequence occupies residues 1–27 (MNYAVLPPELNSLRMFTGAGSAPMLAA). The span at 241–257 (GNGRAGLPGSGNVGNGN) shows a compositional bias: gly residues. The segment at 241-278 (GNGRAGLPGSGNVGNGNLGNSNLGSGNTGNSNVGFGNT) is disordered. Over residues 258 to 278 (LGNSNLGSGNTGNSNVGFGNT) the composition is skewed to low complexity.

This sequence belongs to the mycobacterial PPE family.

This is an uncharacterized protein from Mycobacterium tuberculosis (strain ATCC 25618 / H37Rv).